The primary structure comprises 636 residues: 1-deoxy-D-xylulose-5-phosphate synthase (636 aa).

Thiamine diphosphate contacts are provided by residues H75 and 116-118; that span reads AHS. D147 is a Mg(2+) binding site. Thiamine diphosphate contacts are provided by residues 148–149, N177, Y288, and E370; that span reads GA. N177 is a Mg(2+) binding site.

This sequence belongs to the transketolase family. DXPS subfamily. As to quaternary structure, homodimer. It depends on Mg(2+) as a cofactor. Thiamine diphosphate is required as a cofactor.

It carries out the reaction D-glyceraldehyde 3-phosphate + pyruvate + H(+) = 1-deoxy-D-xylulose 5-phosphate + CO2. Its pathway is metabolic intermediate biosynthesis; 1-deoxy-D-xylulose 5-phosphate biosynthesis; 1-deoxy-D-xylulose 5-phosphate from D-glyceraldehyde 3-phosphate and pyruvate: step 1/1. Functionally, catalyzes the acyloin condensation reaction between C atoms 2 and 3 of pyruvate and glyceraldehyde 3-phosphate to yield 1-deoxy-D-xylulose-5-phosphate (DXP). The protein is 1-deoxy-D-xylulose-5-phosphate synthase of Ralstonia nicotianae (strain ATCC BAA-1114 / GMI1000) (Ralstonia solanacearum).